The chain runs to 510 residues: 2,3-bisphosphoglycerate-independent phosphoglycerate mutase (510 aa).

Positions 12 and 62 each coordinate Mn(2+). Catalysis depends on Ser62, which acts as the Phosphoserine intermediate. Residues His123, 153–154, Arg185, Arg191, 261–264, and Lys336 each bind substrate; these read RD and RPDR. Mn(2+) contacts are provided by Asp403, His407, Asp444, His445, and His462.

Belongs to the BPG-independent phosphoglycerate mutase family. In terms of assembly, monomer. It depends on Mn(2+) as a cofactor.

The enzyme catalyses (2R)-2-phosphoglycerate = (2R)-3-phosphoglycerate. It participates in carbohydrate degradation; glycolysis; pyruvate from D-glyceraldehyde 3-phosphate: step 3/5. Its function is as follows. Essential for rapid growth and for sporulation. Catalyzes the interconversion of 2-phosphoglycerate and 3-phosphoglycerate. This Priestia megaterium (strain DSM 319 / IMG 1521) (Bacillus megaterium) protein is 2,3-bisphosphoglycerate-independent phosphoglycerate mutase.